Consider the following 272-residue polypeptide: Orotidine 5'-phosphate decarboxylase (272 aa).

Lys-96 functions as the Proton donor in the catalytic mechanism.

Belongs to the OMP decarboxylase family. Type 2 subfamily.

The enzyme catalyses orotidine 5'-phosphate + H(+) = UMP + CO2. It functions in the pathway pyrimidine metabolism; UMP biosynthesis via de novo pathway; UMP from orotate: step 2/2. This chain is Orotidine 5'-phosphate decarboxylase, found in Phocaeicola vulgatus (strain ATCC 8482 / DSM 1447 / JCM 5826 / CCUG 4940 / NBRC 14291 / NCTC 11154) (Bacteroides vulgatus).